A 91-amino-acid polypeptide reads, in one-letter code: RING finger protein Z (91 aa).

G2 is lipidated: N-myristoyl glycine; by host. An RING-type; atypical zinc finger spans residues 35–71 (CKCCWFQDKNLVECSDHYLCLKCISSMLKRGKNCEIC). A PTAP/PSAP motif motif is present at residues 85–88 (PTAP).

This sequence belongs to the arenaviridae Z protein family. Interacts with protein NP; this interaction probably directs the encapsidated genome to budding sites. Interacts (via RING domain) with polymerase L; this interaction inhibits viral transcription and replication, Z partially blocks the product exit tunnel for the releasing nascent RNA product. Interacts with the glycoprotein complex; this interaction plays a role in virion budding. Interacts with host eIF4E; this interaction results in eIF4E reduced affinity for its substrate, the 5'-m7 G cap structure. Interacts (via late-budding domain) with host TSG101; this interaction is essential for budding and release of viral particles. Interacts with host RPLP0; this interaction may serve to load ribosome-like particles inside the virion. Interacts with host PML; this interaction induces PML bodies redistribution in the cytoplasm upon viral infection. In terms of processing, myristoylation is required for the role of RING finger protein Z in assembly and budding.

The protein localises to the virion. The protein resides in the host cytoplasm. It is found in the host perinuclear region. It localises to the host cell membrane. Functionally, plays a crucial role in virion assembly and budding. Expressed late in the virus life cycle, it acts as an inhibitor of viral transcription and RNA synthesis by interacting with the viral polymerase L. Presumably recruits the NP encapsidated genome to cellular membranes at budding sites via direct interaction with NP. Plays critical roles in the final steps of viral release by interacting with host TSG101, a member of the vacuolar protein-sorting pathway and using other cellular host proteins involved in vesicle formation pathway. The budding of the virus progeny occurs after association of protein Z with the viral glycoprotein complex SSP-GP1-GP2 at the cell periphery, step that requires myristoylation of protein Z. Also selectively represses protein production by associating with host eIF4E. In cell-based minigenome assay, has an inhibitory effect on the ribonucleoprotein machinery (vRNP), which is responsible for the replication and transcription of the viral genome. This Latino mammarenavirus (isolate Rat/Bolivia/MARU 1924/1965) (LATV) protein is RING finger protein Z.